A 157-amino-acid polypeptide reads, in one-letter code: Capsid protein (157 aa).

At Ser2 the chain carries N-acetylserine; by host.

Belongs to the virgaviridae capsid protein family.

It is found in the virion. Functionally, capsid protein self-assembles to form rod-shaped virions about 18 nm in diameter with a central canal enclosing the viral genomic RNA. This Brassicaceae (TVCV) protein is Capsid protein (CP).